Reading from the N-terminus, the 119-residue chain is DNA-binding protein inhibitor ID-3 (119 aa).

Positions 28 to 80 (RGKSPAAEEPLSLLDDMNHCYSRLRELVPGVPRGTQLSQVEILQRVIDYILDL) constitute a bHLH domain.

In terms of assembly, homodimer, and heterodimer with other HLH proteins. Interacts with COPS5 and COPS7A. Interacts with IFI204. Interacts with GATA4 and NKX2-5. Interacts with ANKRD2; both proteins cooperate in myoblast differentiation. Interacts with CLOCK and BMAL1.

The protein resides in the nucleus. Transcriptional regulator (lacking a basic DNA binding domain) which negatively regulates the basic helix-loop-helix (bHLH) transcription factors by forming heterodimers and inhibiting their DNA binding and transcriptional activity. Implicated in regulating a variety of cellular processes, including cellular growth, senescence, differentiation, apoptosis, angiogenesis, and neoplastic transformation. Involved in myogenesis by inhibiting skeletal muscle and cardiac myocyte differentiation and promoting muscle precursor cells proliferation. Inhibits the binding of E2A-containing protein complexes to muscle creatine kinase E-box enhancer. Regulates the circadian clock by repressing the transcriptional activator activity of the CLOCK-BMAL1 heterodimer. The sequence is that of DNA-binding protein inhibitor ID-3 (ID3) from Bos taurus (Bovine).